Here is a 465-residue protein sequence, read N- to C-terminus: Hepatocyte nuclear factor 6 (465 aa).

Disordered stretches follow at residues 15–84 (GVSH…GPLH) and 119–141 (SDKFPHHHHHHHHHHHPHHHQRL). Residues 123–140 (PHHHHHHHHHHHPHHHQR) are compositionally biased toward basic residues. The CUT DNA-binding region spans 283 to 369 (GSNSGQMEEI…QRMSALRLAA (87 aa)). Positions 385 to 444 (PKKPRLVFTDVQRRTLHAIFKENKRPSKELQITISQQLGLELSTVSNFFMNARRRSLDKW) form a DNA-binding region, homeobox. The segment at 443–465 (KWQDEGGSNSGSSSSSSSTCTKA) is disordered. Positions 448–465 (GGSNSGSSSSSSSTCTKA) are enriched in low complexity.

This sequence belongs to the CUT homeobox family. In terms of assembly, binds DNA as a monomer.

It localises to the nucleus. Its function is as follows. Transcriptional activator. Binds the consensus sequence 5'-DHWATTGAYTWWD-3' on a variety of gene promoters such as those of HNF3B and TTR. Important for liver genes transcription. Stimulates the expression of Onecut3 in the developing endoderm. The protein is Hepatocyte nuclear factor 6 (Onecut1) of Mus musculus (Mouse).